Consider the following 602-residue polypeptide: MTAPDAPFDARAFLRTVPEEPGVYRMIGADERVLYVGKAKNLKRRVSSYFQRTQPSPRIAMMVAQILRVDITPTRSEAEALLLENNLIKSLAPRYNILFRDDKTYPYIELSGDEFPRLAYHRGAFTKGARYFGPFPNVWAVRESIHLLQKTFRLRTCENPVFQNRSRPCLLHQIKRCTAPCVGLIDKEAYAADVRLAARFLEGRASEVIDDLTARMHAAAERLAFEEAAACRDQVRVLQAVLARQFVDSRKDEDVDIIAAVEEGSVTCVNIAMVRGGRHLGDRPQFPSATAGIGMLDAALAFIEQHYREHELPAKLLVDVPLAPVRVLMDEICDKPCTLLVPRLQAEKVWMGMAENNARLAIIARARDTGRAEMRLEALRETLDLAEAPRRIECFDISHTMGEATVASCVVSVDGAMKNSEYRRYNITGITPGDDFAAMRQVLERRYGKVAAGEGVCPDLILIDGGKGQVSSARSVLADVGLESIAMVGVAKGEERKPGLETLVFPDGRMQNLAIDHPALHLIQEIRDEAHRFAITGHRARRAKARIGSRLEDIPGIGPMRRRNLLASFGGLDGVRAATVEDLCRVGGVSRKTAEAIYNALH.

Residues Glu19–Ile97 form the GIY-YIG domain. The region spanning Ser206–Val241 is the UVR domain.

Belongs to the UvrC family. In terms of assembly, interacts with UvrB in an incision complex.

It localises to the cytoplasm. The UvrABC repair system catalyzes the recognition and processing of DNA lesions. UvrC both incises the 5' and 3' sides of the lesion. The N-terminal half is responsible for the 3' incision and the C-terminal half is responsible for the 5' incision. In Aromatoleum aromaticum (strain DSM 19018 / LMG 30748 / EbN1) (Azoarcus sp. (strain EbN1)), this protein is UvrABC system protein C.